Consider the following 147-residue polypeptide: UPF0460 protein in nifX-nifW intergenic region (147 aa).

Belongs to the UPF0460 family.

The sequence is that of UPF0460 protein in nifX-nifW intergenic region from Frankia alni.